We begin with the raw amino-acid sequence, 1032 residues long: Putative oxidoreductase YgfK (1032 aa).

A 4Fe-4S ferredoxin-type domain is found at 928–958 (RFQTLHLDAYCNECGNCAQFCPWNGKPYKDK). [4Fe-4S] cluster contacts are provided by Cys938, Cys941, Cys944, and Cys948.

It depends on [4Fe-4S] cluster as a cofactor.

Its function is as follows. Could be an iron-sulfur flavoprotein with NADPH:O(2) oxidoreductase activity. The chain is Putative oxidoreductase YgfK (ygfK) from Escherichia coli (strain K12).